A 404-amino-acid polypeptide reads, in one-letter code: S-adenosylmethionine synthase (404 aa).

The segment covering 1 to 13 has biased composition (polar residues); that stretch reads MSHSRYFFTSESV. The interval 1-20 is disordered; it reads MSHSRYFFTSESVSEGHPDK. An ATP-binding site is contributed by His-17. Asp-19 is a Mg(2+) binding site. Position 45 (Glu-45) interacts with K(+). Residues Glu-58 and Gln-101 each coordinate L-methionine. The tract at residues 101 to 111 is flexible loop; it reads QSPDINRGVDR. ATP contacts are provided by residues 172 to 174, 246 to 247, Asp-255, 261 to 262, Ala-278, and Lys-282; these read DSK, RF, and RK. Asp-255 is an L-methionine binding site. Residue Lys-286 coordinates L-methionine.

Belongs to the AdoMet synthase family. In terms of assembly, homotetramer; dimer of dimers. Mg(2+) is required as a cofactor. Requires K(+) as cofactor.

It localises to the cytoplasm. The enzyme catalyses L-methionine + ATP + H2O = S-adenosyl-L-methionine + phosphate + diphosphate. Its pathway is amino-acid biosynthesis; S-adenosyl-L-methionine biosynthesis; S-adenosyl-L-methionine from L-methionine: step 1/1. In terms of biological role, catalyzes the formation of S-adenosylmethionine (AdoMet) from methionine and ATP. The overall synthetic reaction is composed of two sequential steps, AdoMet formation and the subsequent tripolyphosphate hydrolysis which occurs prior to release of AdoMet from the enzyme. The protein is S-adenosylmethionine synthase of Chlorobaculum parvum (strain DSM 263 / NCIMB 8327) (Chlorobium vibrioforme subsp. thiosulfatophilum).